The following is a 158-amino-acid chain: NADH-quinone oxidoreductase subunit B (158 aa).

[4Fe-4S] cluster is bound by residues Cys36, Cys37, Cys101, and Cys131.

The protein belongs to the complex I 20 kDa subunit family. NDH-1 is composed of 14 different subunits. Subunits NuoB, C, D, E, F, and G constitute the peripheral sector of the complex. It depends on [4Fe-4S] cluster as a cofactor.

The protein resides in the cell inner membrane. It carries out the reaction a quinone + NADH + 5 H(+)(in) = a quinol + NAD(+) + 4 H(+)(out). Its function is as follows. NDH-1 shuttles electrons from NADH, via FMN and iron-sulfur (Fe-S) centers, to quinones in the respiratory chain. The immediate electron acceptor for the enzyme in this species is believed to be ubiquinone. Couples the redox reaction to proton translocation (for every two electrons transferred, four hydrogen ions are translocated across the cytoplasmic membrane), and thus conserves the redox energy in a proton gradient. In Francisella tularensis subsp. tularensis (strain FSC 198), this protein is NADH-quinone oxidoreductase subunit B.